Consider the following 139-residue polypeptide: ATP synthase epsilon chain (139 aa).

Belongs to the ATPase epsilon chain family. As to quaternary structure, F-type ATPases have 2 components, CF(1) - the catalytic core - and CF(0) - the membrane proton channel. CF(1) has five subunits: alpha(3), beta(3), gamma(1), delta(1), epsilon(1). CF(0) has three main subunits: a, b and c.

The protein resides in the cell inner membrane. Functionally, produces ATP from ADP in the presence of a proton gradient across the membrane. This chain is ATP synthase epsilon chain, found in Haemophilus ducreyi (strain 35000HP / ATCC 700724).